The following is a 680-amino-acid chain: Zinc finger protein 334 (680 aa).

One can recognise a KRAB domain in the interval 10–81; the sequence is VSFQDLTVNF…EEFSNQNYPD (72 aa). 14 C2H2-type zinc fingers span residues 237-259, 265-287, 293-315, 321-343, 349-371, 377-399, 405-427, 433-455, 461-483, 544-566, 572-594, 600-622, 628-650, and 656-678; these read NECN…QRIH, YVCS…RRIH, YECS…QKIH, YECN…FRSH, YECK…QRTH, NECK…QRIH, YECS…RRSH, YECS…QITH, YECN…QRTH, YECN…RRIH, YECN…QKIH, and YECN…QKSH.

The protein belongs to the krueppel C2H2-type zinc-finger protein family.

It localises to the nucleus. In terms of biological role, may be involved in transcriptional regulation. In Homo sapiens (Human), this protein is Zinc finger protein 334 (ZNF334).